Consider the following 399-residue polypeptide: Argininosuccinate synthase (399 aa).

ATP is bound by residues 10-18 and alanine 38; that span reads AYSGGVDTS. Tyrosine 89 contacts L-citrulline. Glycine 119 lines the ATP pocket. The L-aspartate site is built by threonine 121, asparagine 125, and aspartate 126. Residue asparagine 125 participates in L-citrulline binding. L-citrulline contacts are provided by arginine 129, serine 177, serine 186, glutamate 262, and tyrosine 274.

Belongs to the argininosuccinate synthase family. Type 1 subfamily. In terms of assembly, homotetramer.

Its subcellular location is the cytoplasm. It catalyses the reaction L-citrulline + L-aspartate + ATP = 2-(N(omega)-L-arginino)succinate + AMP + diphosphate + H(+). Its pathway is amino-acid biosynthesis; L-arginine biosynthesis; L-arginine from L-ornithine and carbamoyl phosphate: step 2/3. The sequence is that of Argininosuccinate synthase from Rippkaea orientalis (strain PCC 8801 / RF-1) (Cyanothece sp. (strain PCC 8801)).